Consider the following 418-residue polypeptide: Neurotensin receptor type 1 (418 aa).

Residues 1-67 lie on the Extracellular side of the membrane; it reads MRLNSSAPGT…TDIYSKVLVT (67 aa). N-linked (GlcNAc...) asparagine glycans are attached at residues Asn-4, Asn-37, and Asn-41. The chain crosses the membrane as a helical span at residues 68–88; the sequence is AVYLALFVVGTVGNTVTAFTL. Over 89-102 the chain is Cytoplasmic; the sequence is ARKKSLQSLQSTVH. A helical transmembrane segment spans residues 103–122; it reads YHLGSLALSDLLTLLLAMPV. Topologically, residues 123–142 are extracellular; that stretch reads ELYNFIWVHHPWAFGDAGCR. A disulfide bridge connects residues Cys-141 and Cys-224. The chain crosses the membrane as a helical span at residues 143–164; it reads GYYFLRDACTYATALNVASLSV. Topologically, residues 165-184 are cytoplasmic; it reads ERYLAICHPFKAKTLMSRSR. A helical transmembrane segment spans residues 185 to 205; it reads TKKFISAIWLASALLAVPMLF. Residues 206–234 lie on the Extracellular side of the membrane; it reads TMGEQNRSADGQHAGGLVCTPTIHTATVK. Residues 235–259 traverse the membrane as a helical segment; sequence VVIQVNTFMSFIFPMVVISVLNTII. Over 260-303 the chain is Cytoplasmic; it reads ANKLTVMVRQAAEQGQVCTVGGEHSTFSMAIEPGRVQALRHGVR. The chain crosses the membrane as a helical span at residues 304–325; it reads VLRAVVIAFVVCWLPYHVRRLM. Positions 321–344 are neurotensin binding; sequence VRRLMFCYISDEQWTPFLYDFYHY. At 326-343 the chain is on the extracellular side; that stretch reads FCYISDEQWTPFLYDFYH. The helical transmembrane segment at 344-364 threads the bilayer; the sequence is YFYMVTNALFYVSSTINPILY. At 365-418 the chain is on the cytoplasmic side; sequence NLVSANFRHIFLATLACLCPVWRRRRKRPAFSRKADSVSSNHTLSSNATRETLY. S-palmitoyl cysteine attachment occurs at residues Cys-381 and Cys-383.

This sequence belongs to the G-protein coupled receptor 1 family. Neurotensin receptor subfamily. NTSR1 sub-subfamily. As to quaternary structure, interacts (palmitoylated form) with GNA11. In terms of processing, N-glycosylated. Post-translationally, palmitoylated; this is required for normal localization at membrane rafts and normal GNA11-mediated activation of down-stream signaling cascades. The palmitoylation level increases in response to neurotensin treatment. In terms of tissue distribution, expressed in prostate (at protein level). Detected in colon and peripheral blood mononuclear cells. Detected at very low levels in brain.

The protein resides in the cell membrane. It is found in the membrane raft. In terms of biological role, G-protein coupled receptor for the tridecapeptide neurotensin (NTS). Signaling is effected via G proteins that activate a phosphatidylinositol-calcium second messenger system. Signaling leads to the activation of downstream MAP kinases and protects cells against apoptosis. This chain is Neurotensin receptor type 1 (NTSR1), found in Homo sapiens (Human).